We begin with the raw amino-acid sequence, 1175 residues long: Pyruvate carboxylase (1175 aa).

Positions 22–474 (NANKILVANR…WTTFIDDTPS (453 aa)) constitute a Biotin carboxylation domain. Lys-140, Glu-224, and His-259 together coordinate ATP. Residues 144-341 (RNLAGKCNVP…IVAAQIQIAA (198 aa)) form the ATP-grasp domain. Arg-316 is an active-site residue. The region spanning 561 to 828 (CLIMDTTWRD…NTGITEQNAR (268 aa)) is the Pyruvate carboxyltransferase domain. Residues 569-573 (RDAHQ) and Arg-642 each bind substrate. Asp-570 provides a ligand contact to a divalent metal cation. A divalent metal cation is bound by residues Lys-738, His-768, and His-770. Lys-738 is modified (N6-carboxylysine). Thr-902 contacts substrate. The region spanning 1099–1174 (KADAHNPNEV…DAGDLICKIT (76 aa)) is the Biotinyl-binding domain. Lys-1140 carries the post-translational modification N6-biotinyllysine.

Requires biotin as cofactor. Zn(2+) is required as a cofactor.

The protein resides in the cytoplasm. The catalysed reaction is hydrogencarbonate + pyruvate + ATP = oxaloacetate + ADP + phosphate + H(+). It functions in the pathway carbohydrate biosynthesis; gluconeogenesis. Pyruvate carboxylase catalyzes a 2-step reaction, involving the ATP-dependent carboxylation of the covalently attached biotin in the first step and the transfer of the carboxyl group to pyruvate in the second. The protein is Pyruvate carboxylase (PYC) of Pichia angusta (Yeast).